Reading from the N-terminus, the 406-residue chain is CRISP/Allergen/PR-1 (406 aa).

The signal sequence occupies residues 1 to 18; the sequence is MHFQVILMMMWLWLEAEG. N39 carries N-linked (GlcNAc...) asparagine glycosylation. Residues 58 to 205 form the SCP domain; that stretch reads LREHNKLRSR…TFKDLYTCNY (148 aa).

Belongs to the CRISP family. In terms of processing, contains 9 disulfide bonds. Expressed by the venom gland.

Its subcellular location is the secreted. In Trittame loki (Brush-footed trapdoor spider), this protein is CRISP/Allergen/PR-1.